A 269-amino-acid polypeptide reads, in one-letter code: BAG family molecular chaperone regulator 4 (269 aa).

Positions methionine 1–alanine 40 are disordered. Residues glutamine 21 to glutamine 35 show a composition bias toward basic and acidic residues. One can recognise a Ubiquitin-like domain in the interval glutamine 46 to lysine 122. The 82-residue stretch at alanine 138–lysine 219 folds into the BAG domain. A disordered region spans residues serine 241–aspartate 269.

Binds to the ATPase domain of HSP70/HSC70 chaperones. Interacts with HSP70-1. Detected in stems, leaves, flowers and roots.

Its function is as follows. Co-chaperone that regulates diverse cellular pathways, such as programmed cell death and stress responses. In Arabidopsis thaliana (Mouse-ear cress), this protein is BAG family molecular chaperone regulator 4 (BAG4).